A 157-amino-acid chain; its full sequence is Cell cycle regulator of non-homologous end joining (157 aa).

An N-acetylmethionine modification is found at M1. A KBM motif is present at residues 1–21 (METLKSKTKTRVLPSWMTAPV). The segment covering 80 to 91 (KPWEQRSLEATD) has biased composition (basic and acidic residues). Residues 80 to 148 (KPWEQRSLEA…EEEKEEEDAL (69 aa)) form a disordered region. A compositionally biased stretch (low complexity) spans 96–106 (SPPCSSSPGSS). Residues 147–157 (ALKYVREIFFS) carry the XLM motif.

Interacts (via KBM motif) with XRCC5/Ku80 and XRCC6/Ku70 heterodimer. Interacts (via XLF motif) with TRIM28/KAP1, ATM, MRE11, NBN and RAD50. Interacts with splicing factor SF3B1. Interacts with ERCC6L2; this interaction is DNA independent.

Its subcellular location is the cytoplasm. It localises to the nucleus. It is found in the chromosome. Functionally, cell-cycle-specific regulator of classical non-homologous end joining (NHEJ) of DNA double-strand break (DSB) repair, which can act both as an activator or inhibitor of NHEJ, depending on the cell cycle phase. Acts as a regulator of DNA repair pathway choice by specifically inhibiting classical NHEJ during the S and G2 phases, thereby promoting error-free repair by homologous recombination during cell cycle phases when sister chromatids are present. Preferentially protects single-stranded overhangs at break sites by inhibiting classical NHEJ, thereby creating a local environment that favors homologous recombination. Acts via interaction with XRCC5/Ku80 and XRCC6/Ku70. In contrast, acts as an activator of NHEJ during G1 phase of the cell cycle: promotes classical NHEJ in G1 phase cells via multivalent interactions that increase the affinity of DNA damage response proteins for DSB-associated chromatin. Also involved in immunoglobulin V(D)J recombination. May also act as an indirect regulator of proteasome. This chain is Cell cycle regulator of non-homologous end joining, found in Mus musculus (Mouse).